We begin with the raw amino-acid sequence, 159 residues long: 3-hydroxyacyl-[acyl-carrier-protein] dehydratase FabZ (159 aa).

Histidine 58 is an active-site residue.

The protein belongs to the thioester dehydratase family. FabZ subfamily.

It localises to the cytoplasm. The enzyme catalyses a (3R)-hydroxyacyl-[ACP] = a (2E)-enoyl-[ACP] + H2O. Its function is as follows. Involved in unsaturated fatty acids biosynthesis. Catalyzes the dehydration of short chain beta-hydroxyacyl-ACPs and long chain saturated and unsaturated beta-hydroxyacyl-ACPs. In Helicobacter pylori (strain Shi470), this protein is 3-hydroxyacyl-[acyl-carrier-protein] dehydratase FabZ.